Reading from the N-terminus, the 292-residue chain is Chondroitin proteoglycan 3 (292 aa).

The first 17 residues, 1–17 (MRFVFIIALLLIGASLA), serve as a signal peptide directing secretion. Positions 28–103 (DVSASEDEFS…EGSGDTSPVV (76 aa)) are disordered. A compositionally biased stretch (low complexity) spans 38–80 (GDSSGEISGESSGEASGEASGEASGEASGEASGESSGETSGES). The span at 81-96 (SGDEETSGEGSGEEGS) shows a compositional bias: acidic residues. Asn-174 and Asn-254 each carry an N-linked (GlcNAc...) asparagine glycan.

This Caenorhabditis elegans protein is Chondroitin proteoglycan 3.